The chain runs to 238 residues: 2-C-methyl-D-erythritol 4-phosphate cytidylyltransferase (238 aa).

This sequence belongs to the IspD/TarI cytidylyltransferase family. IspD subfamily.

It catalyses the reaction 2-C-methyl-D-erythritol 4-phosphate + CTP + H(+) = 4-CDP-2-C-methyl-D-erythritol + diphosphate. Its pathway is isoprenoid biosynthesis; isopentenyl diphosphate biosynthesis via DXP pathway; isopentenyl diphosphate from 1-deoxy-D-xylulose 5-phosphate: step 2/6. Catalyzes the formation of 4-diphosphocytidyl-2-C-methyl-D-erythritol from CTP and 2-C-methyl-D-erythritol 4-phosphate (MEP). The chain is 2-C-methyl-D-erythritol 4-phosphate cytidylyltransferase from Aliivibrio fischeri (strain MJ11) (Vibrio fischeri).